A 179-amino-acid chain; its full sequence is Guanosine-3',5'-bis(diphosphate) 3'-pyrophosphohydrolase MESH1 (179 aa).

Position 2 is an N-acetylglycine (glycine 2). N6-acetyllysine is present on lysine 25. One can recognise an HD domain in the interval 32–127; that stretch reads YINHPIGVAR…VKLADKLYNL (96 aa). Positions 35, 61, and 62 each coordinate Mn(2+). Residues glutamate 65 and aspartate 66 each act as nucleophile in the active site. Lysine 97 carries the post-translational modification N6-acetyllysine. Mn(2+) is bound at residue aspartate 122. Residue lysine 123 is modified to N6-acetyllysine.

It belongs to the MESH1 family. Mn(2+) is required as a cofactor.

The enzyme catalyses guanosine 3',5'-bis(diphosphate) + H2O = GDP + diphosphate + H(+). In terms of biological role, ppGpp hydrolyzing enzyme involved in starvation response. The polypeptide is Guanosine-3',5'-bis(diphosphate) 3'-pyrophosphohydrolase MESH1 (HDDC3) (Homo sapiens (Human)).